The primary structure comprises 715 residues: Methylcrotonoyl-CoA carboxylase subunit alpha, mitochondrial (715 aa).

The transit peptide at 1–38 directs the protein to the mitochondrion; that stretch reads MAAAALLAAVDRNQLRRVPILLLQPREWPWKHRTVKYG. In terms of domain architecture, Biotin carboxylation spans 45 to 490; sequence ITKVLIANRG…HTDFIPQHHK (446 aa). ATP is bound at residue Lys159. Residues 163–360 form the ATP-grasp domain; sequence KSIMAAAGVP…LVEWQLRIAA (198 aa). Lys193 carries the N6-acetyllysine modification. ATP contacts are provided by residues Lys201 and 207-208; that span reads GG. At Lys233 the chain carries N6-acetyllysine. Positions 251, 278, and 318 each coordinate ATP. Residue Arg335 is part of the active site. The residue at position 490 (Lys490) is an N6-acetyllysine. At Lys577 the chain carries N6-acetyllysine; alternate. Lys577 is subject to N6-succinyllysine; alternate. Positions 622-711 constitute a Biotinyl-binding domain; the sequence is SIEVGIPVPK…NRHAPLVEFE (90 aa). N6-biotinyllysine is present on Lys677.

In terms of assembly, probably a dodecamer composed of six biotin-containing alpha subunits (MCCC1) and six beta (MCCC2) subunits. Interacts (via the biotin carboxylation domain) with SIRT4. It depends on biotin as a cofactor. Post-translationally, acetylated.

The protein localises to the mitochondrion matrix. It catalyses the reaction 3-methylbut-2-enoyl-CoA + hydrogencarbonate + ATP = 3-methyl-(2E)-glutaconyl-CoA + ADP + phosphate + H(+). Its pathway is amino-acid degradation; L-leucine degradation; (S)-3-hydroxy-3-methylglutaryl-CoA from 3-isovaleryl-CoA: step 2/3. Functionally, biotin-attachment subunit of the 3-methylcrotonyl-CoA carboxylase, an enzyme that catalyzes the conversion of 3-methylcrotonyl-CoA to 3-methylglutaconyl-CoA, a critical step for leucine and isovaleric acid catabolism. This is Methylcrotonoyl-CoA carboxylase subunit alpha, mitochondrial from Rattus norvegicus (Rat).